The sequence spans 470 residues: MMLFVWTTGLLLLATARGNEVCYSHLGCFSDEKPWAGTLQRPVKSLPASPESINTRFLLYTNENPNNYQLITATDPATIKASNFNLHRKTRFVIHGFIDNGEKDWLTDICKRMFQVEKVNCICVDWQGGSLAIYSQAVQNIRVVGAEVAYLVQVLSDQLGYKPGNVHMIGHSLGAHTAAEAGRRLKGLVGRITGLDPAEPCFQDTPEEVRLDPSDAMFVDVIHTDIAPIIPSFGFGMSQKVGHMDFFPNGGKEMPGCEKNIISTIVDVNGFLEGITSLAACNHMRSYQYYSSSILNPDGFLGYPCASYEEFQKDGCFPCPAEGCPKMGHYADQFQGKANGVEKTYFLNTGDSDNFPRWRYKVSVTLSGEKELSGDIKIALFGRNGNSKQYEIFKGSLKPDARYTHDIDVDLNVGEIQKVKFLWHNNGINLLQPKLGASQITVQSGEYGTKYNFCSSNTVQEDVLQSLSPC.

The first 18 residues, 1–18 (MMLFVWTTGLLLLATARG), serve as a signal peptide directing secretion. The cysteines at positions 22 and 28 are disulfide-linked. The tract at residues 94–106 (IHGFIDNGEKDWL) is required for galactolipase activity. C110 and C121 form a disulfide bridge. S172 serves as the catalytic Nucleophile. D196 (charge relay system) is an active-site residue. Ca(2+) is bound by residues E207, R210, D212, and D215. Residues C257 and C281 are joined by a disulfide bond. The tract at residues 258–280 (EKNIISTIVDVNGFLEGITSLAA) is required for galactolipase activity. H283 (charge relay system) is an active-site residue. 2 disulfide bridges follow: C305–C316 and C319–C324. 2 N-linked (GlcNAc...) asparagine glycosylation sites follow: N354 and N429. Positions 358–470 (WRYKVSVTLS…EDVLQSLSPC (113 aa)) constitute a PLAT domain. An intrachain disulfide couples C454 to C470.

This sequence belongs to the AB hydrolase superfamily. Lipase family. In terms of tissue distribution, pancreas.

It is found in the secreted. The protein resides in the zymogen granule membrane. The protein localises to the cell projection. Its subcellular location is the neuron projection. It carries out the reaction a triacylglycerol + H2O = a diacylglycerol + a fatty acid + H(+). The catalysed reaction is a 1,2-diacyl-3-O-(beta-D-galactosyl)-sn-glycerol + 2 H2O = 3-beta-D-galactosyl-sn-glycerol + 2 a fatty acid + 2 H(+). It catalyses the reaction 1,2,3-tri-(9Z-octadecenoyl)-glycerol + H2O = di-(9Z)-octadecenoylglycerol + (9Z)-octadecenoate + H(+). The enzyme catalyses di-(9Z)-octadecenoylglycerol + H2O = (9Z-octadecenoyl)-glycerol + (9Z)-octadecenoate + H(+). It carries out the reaction (9Z-octadecenoyl)-glycerol + H2O = glycerol + (9Z)-octadecenoate + H(+). The catalysed reaction is 1-(9Z-octadecenoyl)-glycerol + H2O = glycerol + (9Z)-octadecenoate + H(+). It catalyses the reaction 1,2,3-tripropanoylglycerol + H2O = dipropanoylglycerol + propanoate + H(+). The enzyme catalyses 1,2,3-tributanoylglycerol + H2O = dibutanoylglycerol + butanoate + H(+). It carries out the reaction 1,2,3-trioctanoylglycerol + H2O = dioctanoylglycerol + octanoate + H(+). The catalysed reaction is 1,2-didecanoylglycerol + H2O = decanoylglycerol + decanoate + H(+). It catalyses the reaction long chain 1,2-diacyl-3-O-beta-D-galactosyl-sn-glycerol + H2O = long chain acyl-3-O-beta-D-galactosyl-sn-glycerol + a fatty acid + H(+). The enzyme catalyses 1,2-dioctanoyl-3-O-beta-D-galactosyl-sn-glycerol + H2O = octanoyl-3-(beta-D-galactosyl)-sn-glycerol + octanoate + H(+). It carries out the reaction 1,2-didodecanoyl-3-beta-D-galactosyl-sn-glycerol + H2O = dodecanoyl-3-beta-D-galactosyl-sn-glycerol + dodecanoate + H(+). The catalysed reaction is 1-beta-D-galactosyl-2,3-didodecanoyl-sn-glycerol + H2O = 1-beta-D-galactosyl-dodecanoyl-sn-glycerol + dodecanoate + H(+). It catalyses the reaction a 1,2-diacyl-3-O-[alpha-D-galactosyl-(1-&gt;6)-beta-D-galactosyl]-sn-glycerol + H2O = acyl-3-O-[alpha-D-galactosyl-(1-&gt;6)-beta-D-galactosyl]-sn-glycerol + a fatty acid + H(+). The enzyme catalyses long chain 1,2-diacyl-3-O-[alpha-D-galactosyl-(1-&gt;6)-beta-D-galactosyl]-sn-glycerol + H2O = long chain acyl-3-O-[alpha-D-galactosyl-(1-&gt;6)-beta-D-galactosyl]-sn-glycerol + a fatty acid + H(+). It carries out the reaction 1,2-dioctanoyl-3-O-[alpha-D-galactosyl-(1-&gt;6)-beta-D-galactosyl]-sn-glycerol + H2O = octanoyl-3-O-[alpha-D-galactosyl-(1-&gt;6)-beta-D-galactosyl]-sn-glycerol + octanoate + H(+). The catalysed reaction is 1,2-didodecanoyl-3-O-[alpha-D-galactosyl-(1-&gt;6)-beta-D-galactosyl]-sn-glycerol + H2O = dodecanoyl-3-O-[alpha-D-galactosyl-(1-&gt;6)-beta-D-galactosyl]-sn-glycerol + dodecanoate + H(+). It catalyses the reaction a 1,2-diacyl-sn-glycero-3-phosphocholine + H2O = a monoacyl-sn-glycero-3-phosphocholine + a fatty acid + H(+). It participates in glycerolipid metabolism; triacylglycerol degradation. The protein operates within glycolipid metabolism. With respect to regulation, triacylglycerol lipase activity is inhibited by increasing bile salts concentrations and not reactivated by CLPS. Functionally, lipase that primarily hydrolyzes triglycerides and galactosylglycerides. In neonates, may play a major role in pancreatic digestion of dietary fats such as milk fat globules enriched in long-chain triglycerides. Hydrolyzes short-, medium- and long-chain fatty acyls in triglycerides without apparent positional specificity. Can completely deacylate triacylglycerols. When the liver matures and bile salt synthesis increases, likely functions mainly as a galactolipase and monoacylglycerol lipase. Hydrolyzes monogalactosyldiglycerols (MGDG) and digalactosyldiacylglycerols (DGDG) present in a plant-based diet, releasing long-chain polyunsaturated fatty acids. Hydrolyzes medium- and long-chain fatty acyls in galactolipids. May act together with LIPF to hydrolyze partially digested triglycerides. Hydrolyzes long-chain monoglycerides with high efficiency. In cytotoxic T cells, contributes to perforin-dependent cell lysis, but is unlikely to mediate direct cytotoxicity. Also has low phospholipase activity. In neurons, required for the localization of the phospholipid 1-oleoyl-2-palmitoyl-PC (OPPC) to neurite tips through acyl chain remodeling of membrane phospholipids. The resulting OPPC-rich lipid membrane domain recruits the t-SNARE protein STX4 by selectively interacting with the STX4 transmembrane domain and this promotes surface expression of the dopamine transporter SLC6A3/DAT at neurite tips by facilitating fusion of SLC6A3-containing transport vesicles with the plasma membrane. The sequence is that of Pancreatic lipase-related protein 2 from Myocastor coypus (Coypu).